Reading from the N-terminus, the 427-residue chain is Glutamate-1-semialdehyde 2,1-aminomutase (427 aa).

At Lys-265 the chain carries N6-(pyridoxal phosphate)lysine.

This sequence belongs to the class-III pyridoxal-phosphate-dependent aminotransferase family. HemL subfamily. Homodimer. The cofactor is pyridoxal 5'-phosphate.

It localises to the cytoplasm. The catalysed reaction is (S)-4-amino-5-oxopentanoate = 5-aminolevulinate. The protein operates within porphyrin-containing compound metabolism; protoporphyrin-IX biosynthesis; 5-aminolevulinate from L-glutamyl-tRNA(Glu): step 2/2. The chain is Glutamate-1-semialdehyde 2,1-aminomutase from Stutzerimonas stutzeri (strain A1501) (Pseudomonas stutzeri).